A 547-amino-acid polypeptide reads, in one-letter code: bZIP transcription factor 29 (547 aa).

3 disordered regions span residues 1–199, 244–312, and 333–356; these read MGDT…SGGE, NSSE…DIAP, and GDESLKPPPSPGSMSRKVSPTNSV. The segment covering 15-52 has biased composition (polar residues); the sequence is LHSSFGTTSSSIPKNPISQLDLNPNFIRSSAPQFSKPF. The span at 63–73 shows a compositional bias: pro residues; that stretch reads PSHPNLIPPTS. The segment covering 74–89 has biased composition (polar residues); that stretch reads PFSQIPTTRQPGSHNF. A compositionally biased stretch (basic and acidic residues) spans 120–132; the sequence is FRDHDVSMEDRDS. Polar residues predominate over residues 134–157; it reads VFNSNHSLPPSPFTRCNSTSSSSL. Positions 249 to 263 are enriched in basic and acidic residues; that stretch reads DDSKNGNENRDDMES. A compositionally biased stretch (polar residues) spans 264–275; that stretch reads SRASGTKTNGSD. Residues 279 to 294 are compositionally biased toward low complexity; that stretch reads ESSSVNESANNNMNSS. Residues 344-356 are compositionally biased toward polar residues; the sequence is GSMSRKVSPTNSV. A bZIP domain is found at 394 to 457; it reads DPKRVKRILA…MGLTNQNNEL (64 aa). Positions 396–417 are basic motif; it reads KRVKRILANRQSAARSKERKMR. A coiled-coil region spans residues 416-469; that stretch reads MRYIVELEHKVQTLQTEATTLSAQLTLLQRDMMGLTNQNNELKFRLQAMEQQAR. Residues 422–457 form a leucine-zipper region; the sequence is LEHKVQTLQTEATTLSAQLTLLQRDMMGLTNQNNEL. Over residues 517–535 the composition is skewed to low complexity; it reads QLRQQPQQMQQQSHQQNHQ. Residues 517-547 form a disordered region; the sequence is QLRQQPQQMQQQSHQQNHQNGTMATKSESNE. Residues 536–547 show a composition bias toward polar residues; the sequence is NGTMATKSESNE.

In terms of assembly, forms homodimers. Expressed in roots, leaves and flowers. Expressed in the root tips, lateral root primordia, and guard cells of leaves, hypocotyls and anthers.

The protein resides in the cytoplasm. It is found in the nucleus. In terms of biological role, transcription factor that acts as a repressor of reproductive development, meristem size and plant growth. Regulates meristem size, cell size and cell number during plant development. Binds to the promoters of the cell cycle regulators CYCB1-2 and SMR4, and genes involved in cell wall organization, such as XTH9, EXPA1 and EXPA3. Possesses transactivation activity in yeast. Possesses transactivation activity in plant protoplasts. Plays a role in abiotic stress response by binding to the 5'-CAGCTG-3' DNA sequence found in the promoters of MYB44 and TRX8. Plays a role in osmosensory response by binding to the 5'-AGCTGT/G-3' DNA sequence found in the promoters of the hypoosmolarity-responsive genes CYP707A1 and CYP707A3. Binds to the 5'-AGCTGT-3' DNA sequence found in the promoter of the ZAT1 gene in response to abiotic stresses, such as oxidative stress, high-light, osmotic shock, salt and heat stresses. The protein is bZIP transcription factor 29 of Arabidopsis thaliana (Mouse-ear cress).